Consider the following 115-residue polypeptide: NAD(P)H-quinone oxidoreductase subunit M (115 aa).

The protein belongs to the complex I NdhM subunit family. In terms of assembly, NDH-1 can be composed of about 15 different subunits; different subcomplexes with different compositions have been identified which probably have different functions.

The protein resides in the cellular thylakoid membrane. It carries out the reaction a plastoquinone + NADH + (n+1) H(+)(in) = a plastoquinol + NAD(+) + n H(+)(out). The enzyme catalyses a plastoquinone + NADPH + (n+1) H(+)(in) = a plastoquinol + NADP(+) + n H(+)(out). In terms of biological role, NDH-1 shuttles electrons from an unknown electron donor, via FMN and iron-sulfur (Fe-S) centers, to quinones in the respiratory and/or the photosynthetic chain. The immediate electron acceptor for the enzyme in this species is believed to be plastoquinone. Couples the redox reaction to proton translocation, and thus conserves the redox energy in a proton gradient. Cyanobacterial NDH-1 also plays a role in inorganic carbon-concentration. This is NAD(P)H-quinone oxidoreductase subunit M from Prochlorococcus marinus (strain MIT 9215).